Consider the following 101-residue polypeptide: Interleukin-8 (101 aa).

A signal peptide spans 1 to 22; sequence MTSKLAVALLAAFLLSAALCEG. Citrulline is present on Arg27. Cystine bridges form between Cys34-Cys61 and Cys36-Cys77.

This sequence belongs to the intercrine alpha (chemokine CxC) family. As to quaternary structure, homodimer. Interacts with TNFAIP6 (via Link domain); this interaction interferes with chemokine binding to glycosaminoglycans. Post-translationally, citrullination at Arg-27 prevents proteolysis, and dampens tissue inflammation, it also enhances leukocytosis, possibly through impaired chemokine clearance from the blood circulation.

The protein localises to the secreted. Its function is as follows. Chemotactic factor that mediates inflammatory response by attracting neutrophils, basophils, and T-cells to clear pathogens and protect the host from infection. Also plays an important role in neutrophil activation. Released in response to an inflammatory stimulus, exerts its effect by binding to the G-protein-coupled receptors CXCR1 and CXCR2, primarily found in neutrophils, monocytes and endothelial cells. G-protein heterotrimer (alpha, beta, gamma subunits) constitutively binds to CXCR1/CXCR2 receptor and activation by IL8 leads to beta and gamma subunits release from Galpha (GNAI2 in neutrophils) and activation of several downstream signaling pathways including PI3K and MAPK pathways. This chain is Interleukin-8 (CXCL8), found in Cercocebus atys (Sooty mangabey).